The primary structure comprises 61 residues: Small ribosomal subunit protein uS14B (61 aa).

Zn(2+)-binding residues include Cys-24, Cys-27, Cys-40, and Cys-43.

This sequence belongs to the universal ribosomal protein uS14 family. Zinc-binding uS14 subfamily. As to quaternary structure, part of the 30S ribosomal subunit. Contacts proteins S3 and S10. The cofactor is Zn(2+).

Functionally, binds 16S rRNA, required for the assembly of 30S particles and may also be responsible for determining the conformation of the 16S rRNA at the A site. This Mycobacterium bovis (strain ATCC BAA-935 / AF2122/97) protein is Small ribosomal subunit protein uS14B.